The sequence spans 175 residues: Centrosomal protein 20 (175 aa).

The interval 1-104 (MATIAELKAV…IVEDANGKSV (104 aa)) is necessary and sufficient for homooligomerization and localization to centrosomes and pericentriolar satellites. Positions 49-81 (ENLLINELIREYLEFNKYKYSASVLTAEAGQPE) constitute a LisH domain. Residues 137-166 (RQNLAKPSTERNQKDRIPEPGRMAGTSIEE) are disordered. A compositionally biased stretch (basic and acidic residues) spans 144 to 155 (STERNQKDRIPE).

This sequence belongs to the CEP43 family. Homooligomer; probably required for localization to centrosomes.

It is found in the cell projection. Its subcellular location is the cilium. The protein resides in the cytoplasm. It localises to the cytoskeleton. The protein localises to the cilium basal body. It is found in the microtubule organizing center. Its subcellular location is the centrosome. The protein resides in the cytoplasmic granule. It localises to the centriolar satellite. Involved in the biogenesis of cilia. Required for the recruitment of PLK1 to centrosomes and S phase progression. This Gallus gallus (Chicken) protein is Centrosomal protein 20 (CEP20).